Reading from the N-terminus, the 74-residue chain is U3-agatoxin-Ao1f (74 aa).

The N-terminal stretch at 1–20 is a signal peptide; that stretch reads MRAIISLLLISTMVFGVIEA. The propeptide occupies 21–34; it reads VSLEEGLKIFEGER. 4 cysteine pairs are disulfide-bonded: C37-C53, C44-C58, C52-C68, and C60-C66. The residue at position 72 (N72) is an Asparagine amide.

Belongs to the neurotoxin 07 (Beta/delta-agtx) family. 03 (aga-4) subfamily. Aga sub-subfamily. In terms of tissue distribution, expressed by the venom gland.

It localises to the secreted. In terms of biological role, insecticidal neurotoxin that modulates the insect Nav channel (DmNaV1/tipE (para/tipE)) in a unique manner, with both the activation and inactivation processes being affected. The voltage dependence of activation is shifted toward more hyperpolarized potentials (analogous to site 4 toxins) and a non-inactivating persistent sodium current is induced (site 3-like action). Interestingly, both effects take place in a voltage-dependent manner, producing a bell-shaped curve between -80 and 0 mV. In vivo, induces an irreversible spastic paralysis when injected into insects. This is U3-agatoxin-Ao1f from Agelena orientalis (Funnel-web spider).